The sequence spans 314 residues: Methionyl-tRNA formyltransferase (314 aa).

113 to 116 (SLLP) is a (6S)-5,6,7,8-tetrahydrofolate binding site.

This sequence belongs to the Fmt family.

The catalysed reaction is L-methionyl-tRNA(fMet) + (6R)-10-formyltetrahydrofolate = N-formyl-L-methionyl-tRNA(fMet) + (6S)-5,6,7,8-tetrahydrofolate + H(+). Attaches a formyl group to the free amino group of methionyl-tRNA(fMet). The formyl group appears to play a dual role in the initiator identity of N-formylmethionyl-tRNA by promoting its recognition by IF2 and preventing the misappropriation of this tRNA by the elongation apparatus. The sequence is that of Methionyl-tRNA formyltransferase from Pseudomonas syringae pv. tomato (strain ATCC BAA-871 / DC3000).